A 415-amino-acid polypeptide reads, in one-letter code: Coenzyme F420 hydrogenase subunit alpha (415 aa).

Cysteine 68, cysteine 71, cysteine 391, and cysteine 394 together coordinate Ni(2+).

This sequence belongs to the [NiFe]/[NiFeSe] hydrogenase large subunit family. In terms of assembly, heterocomplex of the form (alpha(1)beta(1)gamma(1))(8). Ni(2+) serves as cofactor. It depends on iron-sulfur cluster as a cofactor. FAD is required as a cofactor.

It catalyses the reaction oxidized coenzyme F420-(gamma-L-Glu)(n) + H2 + H(+) = reduced coenzyme F420-(gamma-L-Glu)(n). Functionally, reduces the physiological low-potential two-electron acceptor coenzyme F420, and the artificial one-electron acceptor methylviologen. This Methanocaldococcus jannaschii (strain ATCC 43067 / DSM 2661 / JAL-1 / JCM 10045 / NBRC 100440) (Methanococcus jannaschii) protein is Coenzyme F420 hydrogenase subunit alpha (frhA).